We begin with the raw amino-acid sequence, 68 residues long: ATP synthase protein 8 (68 aa).

A helical membrane pass occupies residues 8 to 24; it reads TWLTIITPTLLALFLIT. Lys54 is subject to N6-acetyllysine; alternate. Lys54 is subject to N6-succinyllysine; alternate. Lys57 bears the N6-acetyllysine mark.

This sequence belongs to the ATPase protein 8 family. As to quaternary structure, F-type ATPases have 2 components, CF(1) - the catalytic core - and CF(0) - the membrane proton channel. Component of an ATP synthase complex composed of ATP5PB, ATP5MC1, ATP5F1E, ATP5PD, ATP5ME, ATP5PF, ATP5MF, MT-ATP6, MT-ATP8, ATP5F1A, ATP5F1B, ATP5F1D, ATP5F1C, ATP5PO, ATP5MG, ATP5MK and ATP5MJ. Interacts with PRICKLE3.

The protein localises to the mitochondrion membrane. In terms of biological role, mitochondrial membrane ATP synthase (F(1)F(0) ATP synthase or Complex V) produces ATP from ADP in the presence of a proton gradient across the membrane which is generated by electron transport complexes of the respiratory chain. F-type ATPases consist of two structural domains, F(1) - containing the extramembraneous catalytic core and F(0) - containing the membrane proton channel, linked together by a central stalk and a peripheral stalk. During catalysis, ATP synthesis in the catalytic domain of F(1) is coupled via a rotary mechanism of the central stalk subunits to proton translocation. Part of the complex F(0) domain. Minor subunit located with subunit a in the membrane. This chain is ATP synthase protein 8 (MT-ATP8), found in Pongo pygmaeus (Bornean orangutan).